The following is a 204-amino-acid chain: 3-isopropylmalate dehydratase small subunit (204 aa).

Belongs to the LeuD family. LeuD type 1 subfamily. Heterodimer of LeuC and LeuD.

The catalysed reaction is (2R,3S)-3-isopropylmalate = (2S)-2-isopropylmalate. The protein operates within amino-acid biosynthesis; L-leucine biosynthesis; L-leucine from 3-methyl-2-oxobutanoate: step 2/4. Its function is as follows. Catalyzes the isomerization between 2-isopropylmalate and 3-isopropylmalate, via the formation of 2-isopropylmaleate. The chain is 3-isopropylmalate dehydratase small subunit from Chloroflexus aggregans (strain MD-66 / DSM 9485).